Here is a 550-residue protein sequence, read N- to C-terminus: Lariat debranching enzyme (550 aa).

A divalent metal cation is bound by residues Cys8 and His10. The residue at position 28 (Ser28) is a Phosphoserine. Asp39 and Asn84 together coordinate a divalent metal cation. The segment at 124-154 (SGIFKSHDYRKGHFECPPYNSSTIRSIYHVR) is lariat recognition loop. N6-acetyllysine is present on Lys128. 3 residues coordinate a divalent metal cation: His174, His226, and His228. The tract at residues 390–550 (EHHQCGEYEQ…AVDDGDASAE (161 aa)) is disordered. A compositionally biased stretch (polar residues) spans 416 to 426 (NTDTSALSSIN). The segment covering 430–445 (IMLDEEEEEEEEEEEA) has biased composition (acidic residues). Polar residues predominate over residues 450-483 (SDMNTPSVEPASDQASDLSTSFSDIRNLPSSMFV). A phosphoserine mark is found at Ser470, Ser480, Ser484, Ser485, Ser489, Ser491, Ser494, Ser505, and Ser520. Residues 498-528 (KCGETVESGDEKDLAKFPLKRLSDEHEPEQR) show a composition bias toward basic and acidic residues.

Belongs to the lariat debranching enzyme family. Fe(2+) is required as a cofactor. Requires Zn(2+) as cofactor. Mn(2+) serves as cofactor.

The protein localises to the nucleus. Active in presence of diverse metals including Fe(2+), Zn(2+), Mn(2+). Also activated by Ca(2+). Binds two metal cations in two adjacent alpha and beta metal-binding pockets. In terms of biological role, cleaves the 2'-5' phosphodiester linkage at the branch point of excised lariat intron RNA and converts them into linear molecules that can be subsequently degraded, thereby facilitating ribonucleotide turnover. Linked to its role in pre-mRNA processing mechanism, may also participate in retrovirus replication and have an antiviral cell-intrinsic defense function. The sequence is that of Lariat debranching enzyme (Dbr1) from Mus musculus (Mouse).